We begin with the raw amino-acid sequence, 122 residues long: MRHYEIVFIVHPDQSEQVPAMIERYKGIVTARGGVVHRVEDWGRRQMAYLIQKLAKAHYVCLNIECDGETLTEIETGFKFNDAVLRHLTVKMKKAETAPSPMMKAVQKEDAAKSHRTEAPAA.

The interval 96–122 (ETAPSPMMKAVQKEDAAKSHRTEAPAA) is disordered. A compositionally biased stretch (basic and acidic residues) spans 106–122 (VQKEDAAKSHRTEAPAA).

This sequence belongs to the bacterial ribosomal protein bS6 family.

Binds together with bS18 to 16S ribosomal RNA. In Herminiimonas arsenicoxydans, this protein is Small ribosomal subunit protein bS6.